The chain runs to 253 residues: DNA repair protein RecO (253 aa).

It belongs to the RecO family.

In terms of biological role, involved in DNA repair and RecF pathway recombination. This is DNA repair protein RecO from Pediococcus pentosaceus (strain ATCC 25745 / CCUG 21536 / LMG 10740 / 183-1w).